Reading from the N-terminus, the 147-residue chain is Large ribosomal subunit protein uL13 (147 aa).

This sequence belongs to the universal ribosomal protein uL13 family. In terms of assembly, part of the 50S ribosomal subunit.

This protein is one of the early assembly proteins of the 50S ribosomal subunit, although it is not seen to bind rRNA by itself. It is important during the early stages of 50S assembly. In Deinococcus geothermalis (strain DSM 11300 / CIP 105573 / AG-3a), this protein is Large ribosomal subunit protein uL13.